The sequence spans 314 residues: Ribosomal RNA small subunit methyltransferase H (314 aa).

S-adenosyl-L-methionine-binding positions include 37 to 39, D56, F86, D108, and H115; that span reads GGH.

It belongs to the methyltransferase superfamily. RsmH family.

It localises to the cytoplasm. The catalysed reaction is cytidine(1402) in 16S rRNA + S-adenosyl-L-methionine = N(4)-methylcytidine(1402) in 16S rRNA + S-adenosyl-L-homocysteine + H(+). Functionally, specifically methylates the N4 position of cytidine in position 1402 (C1402) of 16S rRNA. The polypeptide is Ribosomal RNA small subunit methyltransferase H (Leptospira biflexa serovar Patoc (strain Patoc 1 / ATCC 23582 / Paris)).